Here is a 211-residue protein sequence, read N- to C-terminus: Secreted phosphoprotein 24 (211 aa).

A signal peptide spans 1-29; that stretch reads MISRMEKMTMMMKILIMFALGMNYWSCSG. 2 cysteine pairs are disulfide-bonded: Cys-92/Cys-103 and Cys-116/Cys-134. A Phosphoserine modification is found at Ser-96. A phosphoserine mark is found at Ser-145, Ser-146, Ser-170, Ser-173, and Ser-182.

This sequence belongs to the SPP2 family. In terms of processing, phosphorylation sites are present in the extracellular medium. Detected in liver and plasma.

It is found in the secreted. Could coordinate an aspect of bone turnover. The polypeptide is Secreted phosphoprotein 24 (SPP2) (Homo sapiens (Human)).